A 534-amino-acid polypeptide reads, in one-letter code: Tyrosine-protein kinase Fyn (534 aa).

The N-myristoyl glycine moiety is linked to residue G2. Residues C3 and C6 are each lipidated (S-palmitoyl cysteine). T12 bears the Phosphothreonine; by PKC mark. The segment at 15-39 (TDERDGSLTQSSGYRYGTDPTPQHY) is disordered. Residues 82–143 (TGVTLFEALY…PSNYVAPVDS (62 aa)) form the SH3 domain. The SH2 domain occupies 149 to 246 (WYFGKLGRKD…GLCFNLTVIA (98 aa)). Residues 268-521 (LFLEQKLGQG…YLQGFLEDYF (254 aa)) enclose the Protein kinase domain. ATP is bound by residues 274–282 (LGQGCFAEV) and K296. D387 acts as the Proton acceptor in catalysis. Y417 is modified (phosphotyrosine; by autocatalysis). Y528 carries the phosphotyrosine modification.

This sequence belongs to the protein kinase superfamily. Tyr protein kinase family. SRC subfamily. As to quaternary structure, associates through its SH3 domain, to the p85 subunit of phosphatidylinositol 3-kinase. The cofactor is Mn(2+). Thymus and spleen.

The protein resides in the cytoplasm. Its subcellular location is the nucleus. It is found in the cell membrane. It localises to the perikaryon. The catalysed reaction is L-tyrosyl-[protein] + ATP = O-phospho-L-tyrosyl-[protein] + ADP + H(+). Its activity is regulated as follows. Inhibited by phosphorylation of Tyr-528 by leukocyte common antigen and activated by dephosphorylation of this site. Tyrosine-protein kinase implicated in the control of cell growth. Plays a role in the regulation of intracellular calcium levels. Required in brain development and mature brain function with important roles in the regulation of axon growth, axon guidance, and neurite extension. Role in CNTN1-mediated signaling. This chain is Tyrosine-protein kinase Fyn (FYN), found in Gallus gallus (Chicken).